The sequence spans 218 residues: Protein-methionine-sulfoxide reductase heme-binding subunit MsrQ (218 aa).

5 helical membrane passes run 14 to 34 (LVHA…WQVW), 60 to 80 (FLLI…AVVI), 86 to 106 (LGLY…TLDL), 121 to 141 (PYIT…ITST), and 155 to 175 (LHTL…WLVK).

This sequence belongs to the MsrQ family. As to quaternary structure, heterodimer of a catalytic subunit (MsrP) and a heme-binding subunit (MsrQ). It depends on FMN as a cofactor. Heme b serves as cofactor.

The protein localises to the cell inner membrane. In terms of biological role, part of the MsrPQ system that repairs oxidized periplasmic proteins containing methionine sulfoxide residues (Met-O), using respiratory chain electrons. Thus protects these proteins from oxidative-stress damage caused by reactive species of oxygen and chlorine generated by the host defense mechanisms. MsrPQ is essential for the maintenance of envelope integrity under bleach stress, rescuing a wide series of structurally unrelated periplasmic proteins from methionine oxidation. MsrQ provides electrons for reduction to the reductase catalytic subunit MsrP, using the quinone pool of the respiratory chain. This chain is Protein-methionine-sulfoxide reductase heme-binding subunit MsrQ, found in Xanthomonas euvesicatoria pv. vesicatoria (strain 85-10) (Xanthomonas campestris pv. vesicatoria).